The chain runs to 102 residues: UPF0122 protein MPN_424 (102 aa).

Belongs to the UPF0122 family.

Functionally, might take part in the signal recognition particle (SRP) pathway. This is inferred from the conservation of its genetic proximity to ftsY/ffh. May be a regulatory protein. This chain is UPF0122 protein MPN_424, found in Mycoplasma pneumoniae (strain ATCC 29342 / M129 / Subtype 1) (Mycoplasmoides pneumoniae).